The primary structure comprises 126 residues: Holo-[acyl-carrier-protein] synthase (126 aa).

Positions 9 and 58 each coordinate Mg(2+).

This sequence belongs to the P-Pant transferase superfamily. AcpS family. Requires Mg(2+) as cofactor.

The protein localises to the cytoplasm. The catalysed reaction is apo-[ACP] + CoA = holo-[ACP] + adenosine 3',5'-bisphosphate + H(+). Its function is as follows. Transfers the 4'-phosphopantetheine moiety from coenzyme A to a Ser of acyl-carrier-protein. The chain is Holo-[acyl-carrier-protein] synthase from Klebsiella pneumoniae (strain 342).